The sequence spans 116 residues: Protein V2 (116 aa).

Belongs to the geminiviridae protein AV2/V2 family. In terms of assembly, interacts with host SGS3.

It is found in the host cytoplasm. The protein resides in the host perinuclear region. Its function is as follows. Through its interaction with host SGS3, acts as a suppressor of RNA-mediated gene silencing, also known as post-transcriptional gene silencing (PTGS), a mechanism of plant viral defense that limits the accumulation of viral RNAs. This Tomato yellow leaf curl virus (strain Israel) (TYLCV) protein is Protein V2.